A 256-amino-acid chain; its full sequence is Alcohol dehydrogenase (256 aa).

Residue 12–35 (FVAGLGGIGLDTSKELVKRDLKNL) coordinates NAD(+). Ser-140 lines the substrate pocket. Tyr-153 serves as the catalytic Proton acceptor.

The protein belongs to the short-chain dehydrogenases/reductases (SDR) family. Homodimer.

The catalysed reaction is a primary alcohol + NAD(+) = an aldehyde + NADH + H(+). The enzyme catalyses a secondary alcohol + NAD(+) = a ketone + NADH + H(+). The chain is Alcohol dehydrogenase (Adh) from Drosophila orena (Fruit fly).